Here is a 159-residue protein sequence, read N- to C-terminus: Large ribosomal subunit protein uL23m (159 aa).

This sequence belongs to the universal ribosomal protein uL23 family. As to quaternary structure, component of the mitochondrial ribosome large subunit (39S) which comprises a 16S rRNA and about 50 distinct proteins.

The protein resides in the mitochondrion. This Caenorhabditis briggsae protein is Large ribosomal subunit protein uL23m (mrpl-23).